A 116-amino-acid chain; its full sequence is Beta-D-galactosidase Rv1717 (116 aa).

Positions 40 to 107 constitute a Cupin type-2 domain; that stretch reads LSVYRPGGTA…TDRQALLLVT (68 aa).

The protein resides in the secreted. Its subcellular location is the cell wall. It catalyses the reaction Hydrolysis of terminal non-reducing beta-D-galactose residues in beta-D-galactosides.. Its activity is regulated as follows. Beta-galactosidase activity is activated by Mg(2+) and significantly inhibited by Ca(2+), Cd(2+), Fe(2+), Ni(2+), Cu(2+) and Zn(2+). Inhibited by EDTA. Beta-D-galactopyranosidase that specifically recognizes the beta-glycosidic bonds formed with beta-D-galactopyranose (beta-D-Gal) or N-acetylgalactosamine (beta-D-GalNAc). May target the galactoside linkages in the exopolysaccharide component of the mycobacterial extracellular polymeric substance (EPS) and help dispersal of Mtb bacteria from a deteriorating biofilm. The chain is Beta-D-galactosidase Rv1717 from Mycobacterium tuberculosis (strain ATCC 25618 / H37Rv).